The sequence spans 281 residues: Sorbose reductase SOU1 (281 aa).

Positions 47, 74, and 119 each coordinate NADP(+). Residues serine 173 and tyrosine 188 each act as proton donor in the active site. NADP(+)-binding residues include tyrosine 188, lysine 192, isoleucine 221, and threonine 223. The active-site Lowers pKa of active site Tyr is the lysine 192.

It belongs to the short-chain dehydrogenases/reductases (SDR) family. In terms of assembly, homotetramer.

The catalysed reaction is D-sorbitol + NADP(+) = keto-L-sorbose + NADPH + H(+). It participates in carbohydrate degradation; L-sorbose degradation. In terms of biological role, catalyzes the NADP dependent reduction of L-sorbose to D-glucitol. Can also convert fructose to mannitol, but less efficiently. The sequence is that of Sorbose reductase SOU1 (SOU1) from Candida albicans (strain SC5314 / ATCC MYA-2876) (Yeast).